A 416-amino-acid polypeptide reads, in one-letter code: Exodeoxyribonuclease 7 large subunit (416 aa).

Belongs to the XseA family. In terms of assembly, heterooligomer composed of large and small subunits.

It is found in the cytoplasm. The catalysed reaction is Exonucleolytic cleavage in either 5'- to 3'- or 3'- to 5'-direction to yield nucleoside 5'-phosphates.. Bidirectionally degrades single-stranded DNA into large acid-insoluble oligonucleotides, which are then degraded further into small acid-soluble oligonucleotides. In Acidothermus cellulolyticus (strain ATCC 43068 / DSM 8971 / 11B), this protein is Exodeoxyribonuclease 7 large subunit.